A 350-amino-acid polypeptide reads, in one-letter code: MNEFFKKISGLFVPPPESTVSVRGQGFQFKVPRGQTILESALHQGIAFPHDCKVGSCGTCKYKLISGRVNELTSSAMGLSGDLYQSGYRLGCQCIPKEDLEIELDTVLGQALVPIETSALISKQKRLAHDIVEMEVVPDKQIAFYPGQYADVECAECSAVRSYSFSAPPQPDGSLSFHVRLVPGGVFSGWLFGGDRTGATLTLRAPYGQFGLHESNATMVCVAGGTGLAPIKCVLQSMTQAQRERDVLLFFGARQQRDLYCLDEIEALQLDWGGRFELIPVLSEESSTSSWKGKRGMVTEYFKEYLTGQPYEGYLCGPPPMVDAAETELVRLGVARELVFADRFYNRPPC.

One can recognise a 2Fe-2S ferredoxin-type domain in the interval 16–108 (PESTVSVRGQ…DLEIELDTVL (93 aa)). Positions 52, 57, 60, and 92 each coordinate [2Fe-2S] cluster. Positions 109-350 (GQALVPIETS…ADRFYNRPPC (242 aa)) are ferredoxin--NADH reductase. Residues 114–213 (PIETSALISK…RAPYGQFGLH (100 aa)) form the FAD-binding FR-type domain.

Belongs to the bacterial ring-hydroxylating dioxygenase ferredoxin reductase family. As to quaternary structure, monomer. The xylene/toluene monooxygenase is composed of two subunits: the electron transfer component XylA and the hydroxylase component XylM. The cofactor is FAD. It depends on [2Fe-2S] cluster as a cofactor.

It localises to the cell inner membrane. It catalyses the reaction 2 reduced [2Fe-2S]-[ferredoxin] + NAD(+) + H(+) = 2 oxidized [2Fe-2S]-[ferredoxin] + NADH. With respect to regulation, the reductase activity is completely inhibited by quercetin (a common inhibitor of mammalian oxidoreductases) and p-chloromercuribenzoate, but not by iodoacetimide, N-ethylmaleimide and pyrrazole. Component of a monooxygenase that catalyzes the first step in the degradation of xylenes and toluenes. XylA is responsible for the transport of electrons from the electron donor NADH to the terminal hydroxylase component, XylM. In Pseudomonas putida (Arthrobacter siderocapsulatus), this protein is Xylene/toluene monooxygenase electron transfer component XylA.